The following is a 479-amino-acid chain: uncharacterized protein (479 aa).

Residues 150–158 (TSGSTGKPK), aspartate 360, arginine 375, and lysine 462 contribute to the ATP site.

It belongs to the ATP-dependent AMP-binding enzyme family.

Its function is as follows. May be involved in fatty acid metabolism. This is an uncharacterized protein from Bacillus subtilis (strain 168).